We begin with the raw amino-acid sequence, 248 residues long: Regulator of G-protein signaling 7-binding protein A (248 aa).

The segment at methionine 1–arginine 32 is disordered. S-palmitoyl cysteine attachment occurs at residues cysteine 243 and cysteine 244.

Belongs to the RGS7BP/RGS9BP family. In terms of processing, palmitoylated. Undergoes rapid palmitoylation turnover. Palmitoylation regulates the cell membrane and nuclear shuttling and the regulation of GPCR signaling. Upon depalmitoylation, it is targeted from the plasma membrane into the nucleus. GPCR signaling inhibits depalmitoylation and promotes localization to the plasma membrane.

Its subcellular location is the nucleus. It is found in the cytoplasm. It localises to the cell membrane. Regulator of G protein-coupled receptor (GPCR) signaling. Regulatory subunit of the R7-Gbeta5 complexes that acts by controlling the subcellular location of the R7-Gbeta5 complexes. When palmitoylated, it targets the R7-Gbeta5 complexes to the plasma membrane, leading to inhibit G protein alpha subunits. When it is unpalmitoylated, the R7-Gbeta5 complexes undergo a nuclear/cytoplasmic shuttling. This is Regulator of G-protein signaling 7-binding protein A (rgs7bpa) from Danio rerio (Zebrafish).